Consider the following 421-residue polypeptide: AP-3 complex subunit mu (421 aa).

The MHD domain maps to 178–420; sequence QNKIFFDIIE…TTKAGKFQVR (243 aa).

The protein belongs to the adaptor complexes medium subunit family. In terms of assembly, adaptor protein complex 3 (AP-3) is a heterotetramer composed of two large adaptins (delta-type subunit and beta-type subunit), a medium adaptin (mu-type subunit) and a small adaptin (sigma-type subunit).

It localises to the endosome membrane. Part of the AP-3 complex, an adaptor-related complex which is essential for the compartmentalization of the endocytic pathway. This is AP-3 complex subunit mu (apm3) from Dictyostelium discoideum (Social amoeba).